Reading from the N-terminus, the 561-residue chain is Carboxylesterase 1E (561 aa).

Residues 1–18 (MCLYALILVFLAAFTAGG) form the signal peptide. N-linked (GlcNAc...) asparagine glycans are attached at residues asparagine 79 and asparagine 107. Cysteine 87 and cysteine 116 are disulfide-bonded. The active-site Acyl-ester intermediate is serine 221. A disulfide bond links cysteine 273 and cysteine 284. Residues glutamate 353 and histidine 466 each act as charge relay system in the active site. Asparagine 489 is a glycosylation site (N-linked (GlcNAc...) asparagine). Residues 558-561 (HTEL) carry the Prevents secretion from ER motif.

Belongs to the type-B carboxylesterase/lipase family. Expressed in liver.

It is found in the endoplasmic reticulum lumen. It localises to the microsome membrane. The enzyme catalyses a carboxylic ester + H2O = an alcohol + a carboxylate + H(+). The catalysed reaction is all-trans-retinyl hexadecanoate + H2O = all-trans-retinol + hexadecanoate + H(+). In terms of biological role, involved in the detoxification of xenobiotics and in the activation of ester and amide prodrugs. Hydrolyzes retinyl esters. This is Carboxylesterase 1E (Ces1e) from Rattus norvegicus (Rat).